The chain runs to 329 residues: GTPase Obg (329 aa).

An Obg domain is found at 2-160 (YNFKDSVSIT…LNVRLELFLV (159 aa)). The 167-residue stretch at 161 to 327 (ADIGLVGPPN…LIKEFFILAK (167 aa)) folds into the OBG-type G domain. GTP is bound by residues 167 to 174 (GPPNAGKS), 192 to 196 (FTTKI), 213 to 216 (DIPG), 280 to 283 (NKLD), and 308 to 310 (SIY). Mg(2+) contacts are provided by Ser174 and Thr194.

This sequence belongs to the TRAFAC class OBG-HflX-like GTPase superfamily. OBG GTPase family. Monomer. Mg(2+) serves as cofactor.

The protein localises to the cytoplasm. An essential GTPase which binds GTP, GDP and possibly (p)ppGpp with moderate affinity, with high nucleotide exchange rates and a fairly low GTP hydrolysis rate. Plays a role in control of the cell cycle, stress response, ribosome biogenesis and in those bacteria that undergo differentiation, in morphogenesis control. This Borrelia garinii subsp. bavariensis (strain ATCC BAA-2496 / DSM 23469 / PBi) (Borreliella bavariensis) protein is GTPase Obg.